The following is a 389-amino-acid chain: Na(+)/H(+) antiporter NhaA (389 aa).

Helical transmembrane passes span 17–37 (ILLLVAVALAMLMANSPLAGL), 59–79 (LLLWINDGLMALFFLLIGLEV), 95–115 (SLPTFAAIGGMLVPAGIYLLF), 124–144 (AGWAIPAATDIAFALGIMALL), 154–174 (VFLLALAIIDDLGVIVIIALF), 177–197 (TDLSTISLIIASIAIVGLVAL), 213–233 (LVLWVAVLKSGVHATLAGVII), 261–281 (FLILPVFAFANAGVALGNMSL), 287–307 (PVPVGIALGLMLGKPIGVMLF), 328–348 (IAPVAAMCGIGFTMSMFIASL), and 363–383 (LGTLIGSILAALIGYFWLSKV).

This sequence belongs to the NhaA Na(+)/H(+) (TC 2.A.33) antiporter family.

It is found in the cell inner membrane. The enzyme catalyses Na(+)(in) + 2 H(+)(out) = Na(+)(out) + 2 H(+)(in). Na(+)/H(+) antiporter that extrudes sodium in exchange for external protons. The chain is Na(+)/H(+) antiporter NhaA from Shewanella sp. (strain MR-4).